The sequence spans 214 residues: Probable transaldolase (214 aa).

The active-site Schiff-base intermediate with substrate is Lys-83.

The protein belongs to the transaldolase family. Type 3B subfamily.

The protein resides in the cytoplasm. The catalysed reaction is D-sedoheptulose 7-phosphate + D-glyceraldehyde 3-phosphate = D-erythrose 4-phosphate + beta-D-fructose 6-phosphate. Its pathway is carbohydrate degradation; pentose phosphate pathway; D-glyceraldehyde 3-phosphate and beta-D-fructose 6-phosphate from D-ribose 5-phosphate and D-xylulose 5-phosphate (non-oxidative stage): step 2/3. Its function is as follows. Transaldolase is important for the balance of metabolites in the pentose-phosphate pathway. The protein is Probable transaldolase of Citrifermentans bemidjiense (strain ATCC BAA-1014 / DSM 16622 / JCM 12645 / Bem) (Geobacter bemidjiensis).